The sequence spans 255 residues: MELDELCLLDALVYLEGFLAFVAFVGLQMVGSSYGRYSSQWSGRRVPARPAWFLQELPSMAWPLYECIRPAAARLGNLPNRVLLAMFLIHYVQRTLVFPVLIRGGKPTLLFTFVLAFLFCTLNGYLQSRYLSQFAVYAEDWVTHPCFLTGFALWLVGMVINIHSDHILRNLRKPGETGYKIPRGGLFEYVSSANYFGELVEWCGFALASWSLQGVVFALFTLCALFTRARQHHQWYLEKFEDYPKTRKILIPFLL.

5 helical membrane passes run 6-26 (LCLL…AFVG), 82-102 (VLLA…PVLI), 107-127 (PTLL…GYLQ), 142-162 (VTHP…VINI), and 205-225 (FALA…LCAL).

It belongs to the steroid 5-alpha reductase family.

The protein localises to the microsome membrane. It localises to the endoplasmic reticulum membrane. The catalysed reaction is a 3-oxo-5alpha-steroid + NADP(+) = a 3-oxo-Delta(4)-steroid + NADPH + H(+). The enzyme catalyses 5alpha-pregnane-3,20-dione + NADP(+) = progesterone + NADPH + H(+). It carries out the reaction 17beta-hydroxy-5alpha-androstan-3-one + NADP(+) = testosterone + NADPH + H(+). It catalyses the reaction androst-4-ene-3,17-dione + NADPH + H(+) = 5alpha-androstan-3,17-dione + NADP(+). Converts testosterone into 5-alpha-dihydrotestosterone and progesterone or corticosterone into their corresponding 5-alpha-3-oxosteroids. It plays a central role in sexual differentiation and androgen physiology. The polypeptide is 3-oxo-5-alpha-steroid 4-dehydrogenase 1 (Mus musculus (Mouse)).